A 342-amino-acid polypeptide reads, in one-letter code: Peptide chain release factor 1 (342 aa).

The residue at position 211 (glutamine 211) is an N5-methylglutamine. The tract at residues 262 to 282 (KEREISQKRKSQIGTGERSEK) is disordered.

The protein belongs to the prokaryotic/mitochondrial release factor family. In terms of processing, methylated by PrmC. Methylation increases the termination efficiency of RF1.

Its subcellular location is the cytoplasm. In terms of biological role, peptide chain release factor 1 directs the termination of translation in response to the peptide chain termination codons UAG and UAA. This is Peptide chain release factor 1 (prfA) from Thermotoga maritima (strain ATCC 43589 / DSM 3109 / JCM 10099 / NBRC 100826 / MSB8).